Here is a 627-residue protein sequence, read N- to C-terminus: DNA-directed RNA polymerase subunit gamma (627 aa).

Residues Cys-70, Cys-72, Cys-85, and Cys-88 each coordinate Zn(2+). Mg(2+) is bound by residues Asp-468, Asp-470, and Asp-472.

It belongs to the RNA polymerase beta' chain family. RpoC1 subfamily. In cyanobacteria the RNAP catalytic core is composed of 2 alpha, 1 beta, 1 beta', 1 gamma and 1 omega subunit. When a sigma factor is associated with the core the holoenzyme is formed, which can initiate transcription. Mg(2+) is required as a cofactor. Requires Zn(2+) as cofactor.

The enzyme catalyses RNA(n) + a ribonucleoside 5'-triphosphate = RNA(n+1) + diphosphate. DNA-dependent RNA polymerase catalyzes the transcription of DNA into RNA using the four ribonucleoside triphosphates as substrates. In Synechococcus sp. (strain JA-2-3B'a(2-13)) (Cyanobacteria bacterium Yellowstone B-Prime), this protein is DNA-directed RNA polymerase subunit gamma.